The sequence spans 54 residues: Large ribosomal subunit protein bL33 (54 aa).

This sequence belongs to the bacterial ribosomal protein bL33 family.

In Roseiflexus castenholzii (strain DSM 13941 / HLO8), this protein is Large ribosomal subunit protein bL33.